A 465-amino-acid chain; its full sequence is Sushi repeat-containing protein SRPX2 (465 aa).

The signal sequence occupies residues 1–23 (MASQLTQRGALFLLFFLTPAVTP). 3 Sushi domains span residues 69–119 (ATCY…YCRQ), 120–178 (MRCH…VCVD), and 262–321 (RRCP…ICAP). 4 cysteine pairs are disulfide-bonded: C71/C105, C91/C117, C122/C163, and C149/C176. Residues 177-261 (VDIDPPKIRC…SCKFIVKVQV (85 aa)) enclose the HYR domain. 2 disulfides stabilise this stretch: C264/C306 and C292/C319.

As to quaternary structure, forms homooligomers. Interacts with PLAUR (via the UPAR/Ly6 domains), ADAMTS4 and CTSB. Interacts with HGF; the interaction increases the mitogenic activity of HGF. Post-translationally, contains chondroitin sulfate chains. In terms of tissue distribution, expressed in neurons of the rolandic area of the brain (at protein level). Highly expressed in the brain, placenta, lung, trachea, uterus, adrenal gland, heart, ovary and placenta. Weakly expressed in the peripheral blood, brain and bone marrow. Expressed in numerous cancer cell lines and in gastrointestinal cancer cells. Higher levels found in colorectal cancers than in normal colonic mucosa.

The protein resides in the secreted. It is found in the cytoplasm. It localises to the cell surface. The protein localises to the synapse. Acts as a ligand for the urokinase plasminogen activator surface receptor. Plays a role in angiogenesis by inducing endothelial cell migration and the formation of vascular network (cords). Involved in cellular migration and adhesion. Increases the phosphorylation levels of FAK. Interacts with and increases the mitogenic activity of HGF. Promotes synapse formation. May have a role in the perisylvian region, critical for language and cognitive development. The polypeptide is Sushi repeat-containing protein SRPX2 (SRPX2) (Homo sapiens (Human)).